Reading from the N-terminus, the 115-residue chain is NADH-ubiquinone oxidoreductase chain 3 (115 aa).

3 helical membrane-spanning segments follow: residues leucine 3–leucine 23, phenylalanine 55–leucine 75, and threonine 87–leucine 107.

This sequence belongs to the complex I subunit 3 family.

The protein localises to the mitochondrion membrane. The enzyme catalyses a ubiquinone + NADH + 5 H(+)(in) = a ubiquinol + NAD(+) + 4 H(+)(out). Core subunit of the mitochondrial membrane respiratory chain NADH dehydrogenase (Complex I) that is believed to belong to the minimal assembly required for catalysis. Complex I functions in the transfer of electrons from NADH to the respiratory chain. The immediate electron acceptor for the enzyme is believed to be ubiquinone. This chain is NADH-ubiquinone oxidoreductase chain 3 (MT-ND3), found in Alligator mississippiensis (American alligator).